A 574-amino-acid polypeptide reads, in one-letter code: (R)-mandelonitrile lyase 4 (574 aa).

The first 27 residues, 1 to 27 (MEKSTMSAVVLVLNLLVLHLQYSEVHS), serve as a signal peptide directing secretion. N-linked (GlcNAc...) asparagine glycosylation is present at Asn-30. Residue 64 to 65 (TS) participates in FAD binding. Asn-76 carries N-linked (GlcNAc...) asparagine glycosylation. Residues 83–84 (ER), Thr-134, and 138–141 (NAGV) contribute to the FAD site. N-linked (GlcNAc...) asparagine glycans are attached at residues Asn-146, Asn-151, and Asn-179. Val-245 lines the FAD pocket. Residues Asn-268 and Asn-310 are each glycosylated (N-linked (GlcNAc...) asparagine). Residue Cys-357 coordinates substrate. Asn-381, Asn-407, and Asn-468 each carry an N-linked (GlcNAc...) asparagine glycan. Cys-428 and Cys-479 form a disulfide bridge. Residue Tyr-486 coordinates substrate. Residues 487–488 (WH) and Gly-516 each bind FAD. The active-site Proton donor is the His-488. His-526 serves as the catalytic Proton acceptor. Residue 527 to 528 (PQ) participates in FAD binding.

This sequence belongs to the GMC oxidoreductase family. As to quaternary structure, monomer. FAD is required as a cofactor.

The protein localises to the vacuole. The protein resides in the aleurone grain. The catalysed reaction is (R)-mandelonitrile = benzaldehyde + hydrogen cyanide. Functionally, involved in cyanogenesis, the release of HCN from injured tissues. Catalyzes the stereospecific addition of HCN to a variety of aldehydes in vitro. It is a major seed constituent, and could have the additional role of a storage form for reduced nitrogen. This Prunus serotina (Black cherry) protein is (R)-mandelonitrile lyase 4 (MDL4).